The following is a 147-amino-acid chain: TRAF-interacting protein with FHA domain-containing protein B (147 aa).

Residues Leu36–Ser108 enclose the FHA domain.

In terms of assembly, interacts with TIFA.

Functionally, inhibits TIFA-mediated TRAF6 activation possibly by inducing a conformational change in TIFA. This is TRAF-interacting protein with FHA domain-containing protein B from Rattus norvegicus (Rat).